Reading from the N-terminus, the 164-residue chain is MPGFIGREQHTVDDKGRLLIPARFRRKFLRQKDEESAEKAKRHEVLYVFKADDGSLELYEPAVWNEKEHQLLKLSDFNPEERLLTTMIYARLDQLELDRSGRIALSREMLDHAGIEREAVVIGANAKMIVWNPDRLTQLLADNAGSFSGLANRYVKGDGKSGVS.

2 SpoVT-AbrB domains span residues 7–63 (REQH…EPAV) and 92–135 (LDQL…NPDR).

It belongs to the MraZ family. Forms oligomers.

It localises to the cytoplasm. It is found in the nucleoid. The chain is Transcriptional regulator MraZ from Chlorobaculum parvum (strain DSM 263 / NCIMB 8327) (Chlorobium vibrioforme subsp. thiosulfatophilum).